Reading from the N-terminus, the 782-residue chain is Protein NEDD1 (782 aa).

WD repeat units lie at residues Met1–Cys34, Ser41–Val80, Ser90–Lys130, Gly133–Glu172, Pro176–Ser216, Gln220–Cys260, Ala262–Thr301, and Ser307–Ala358. Disordered regions lie at residues Pro350 to Gly393 and Pro467 to Gly512. Composition is skewed to polar residues over residues Pro352 to Ala362, Val370 to Arg386, and Ser488 to Ser498. Positions Val753 to Leu782 form a coiled coil.

As to expression, expressed in root meristematic cells.

Its subcellular location is the nucleus envelope. It is found in the chromosome. It localises to the centromere. The protein resides in the kinetochore. The protein localises to the cytoplasm. Its subcellular location is the cytoskeleton. It is found in the phragmoplast. It localises to the microtubule organizing center. Regulates microtubules organization in a centrosome-independent manner. Required for the spindle to be positioned correctly and for the function of gamma-tubulin in organizing phragmoplast microtubules. Component of active gamma-tubulin ring complexes (gamma-TuRCs) associated with cortical microtubules in interphase cells. Mediates gamma-TuRC recruitment to the nucleation sites and is important for determining the ratio of branched to parallel nucleation. May mediate the localization of GCP2 and GCP3 to the nuclear envelope. The protein is Protein NEDD1 of Arabidopsis thaliana (Mouse-ear cress).